The primary structure comprises 269 residues: Small ribosomal subunit protein uS3 (269 aa).

Residues 38 to 106 (IREWLHKNLE…QIQLNILEVK (69 aa)) form the KH type-2 domain. The interval 215 to 269 (AQKAARQAAQGGRGGRGGNRRGRGDRPDRRGGRRRAEAAKQSAETPAPQTENAGA) is disordered. Residues 236-252 (GRGDRPDRRGGRRRAEA) are compositionally biased toward basic and acidic residues. The segment covering 256-269 (SAETPAPQTENAGA) has biased composition (polar residues).

This sequence belongs to the universal ribosomal protein uS3 family. In terms of assembly, part of the 30S ribosomal subunit. Forms a tight complex with proteins S10 and S14.

Its function is as follows. Binds the lower part of the 30S subunit head. Binds mRNA in the 70S ribosome, positioning it for translation. The protein is Small ribosomal subunit protein uS3 of Cutibacterium acnes (strain DSM 16379 / KPA171202) (Propionibacterium acnes).